The primary structure comprises 777 residues: Probable aconitate hydratase, mitochondrial (777 aa).

Residues 1 to 26 (MNSLLRLSHLAGPAHYRALHSSSSIW) constitute a mitochondrion transit peptide. Substrate is bound by residues glutamine 96 and 189–191 (DSH). Positions 382, 445, and 448 each coordinate [4Fe-4S] cluster. Substrate is bound by residues arginine 471 and arginine 476. The disordered stretch occupies residues 534–555 (YDPGEDTFQAPSGSGQVDVSPS). Residues 542–555 (QAPSGSGQVDVSPS) are compositionally biased toward polar residues. Residues arginine 601 and 664 to 665 (SR) each bind substrate.

The protein belongs to the aconitase/IPM isomerase family. As to quaternary structure, monomer. Requires [4Fe-4S] cluster as cofactor.

Its subcellular location is the mitochondrion. The catalysed reaction is citrate = D-threo-isocitrate. Its pathway is carbohydrate metabolism; tricarboxylic acid cycle; isocitrate from oxaloacetate: step 2/2. In terms of biological role, catalyzes the isomerization of citrate to isocitrate via cis-aconitate. The chain is Probable aconitate hydratase, mitochondrial from Caenorhabditis elegans.